The sequence spans 147 residues: Large ribosomal subunit protein uL13 (147 aa).

The protein belongs to the universal ribosomal protein uL13 family. Part of the 50S ribosomal subunit.

In terms of biological role, this protein is one of the early assembly proteins of the 50S ribosomal subunit, although it is not seen to bind rRNA by itself. It is important during the early stages of 50S assembly. This is Large ribosomal subunit protein uL13 from Polaromonas naphthalenivorans (strain CJ2).